Here is a 388-residue protein sequence, read N- to C-terminus: MNLHEYQAKQLFARYGLPAPVGYACTTPREAEEAASKIGAGPWVVKCQVHAGGRGKAGGVKVVKSKEEIRAFAENWLGKRLVTYQTDANGQPVNQILVEAATDIDKELYLGAVVDRSSRRVVFMASTEGGVEIEKVAEETPHLIHKVALDPLTGPMPYQGRELAFKLGLEGKLVQQFTKIFMGLATIFLERDLALIEINPLVITKQGDLICLDGKLGADGNALFRQPDLREMRDQSQEDPREAQAAQWELNYVALDGNIGCMVNGAGLAMGTMDIVKLHGGEPANFLDVGGGATKERVTEAFKIILSDDNVKAVLVNIFGGIVRCDLIADGIIGAVEEVGVNVPVVVRLEGNNAELGAKKLADSGLNIIAAKSLTDAAQQVVAAVEGK.

One can recognise an ATP-grasp domain in the interval 9 to 244 (KQLFARYGLP…QSQEDPREAQ (236 aa)). ATP-binding positions include lysine 46, 53 to 55 (GRG), glutamate 99, threonine 102, and glutamate 107. Mg(2+)-binding residues include asparagine 199 and aspartate 213. Substrate is bound by residues asparagine 264 and 321 to 323 (GIV).

Belongs to the succinate/malate CoA ligase beta subunit family. As to quaternary structure, heterotetramer of two alpha and two beta subunits. Requires Mg(2+) as cofactor.

It catalyses the reaction succinate + ATP + CoA = succinyl-CoA + ADP + phosphate. The catalysed reaction is GTP + succinate + CoA = succinyl-CoA + GDP + phosphate. The protein operates within carbohydrate metabolism; tricarboxylic acid cycle; succinate from succinyl-CoA (ligase route): step 1/1. Succinyl-CoA synthetase functions in the citric acid cycle (TCA), coupling the hydrolysis of succinyl-CoA to the synthesis of either ATP or GTP and thus represents the only step of substrate-level phosphorylation in the TCA. The beta subunit provides nucleotide specificity of the enzyme and binds the substrate succinate, while the binding sites for coenzyme A and phosphate are found in the alpha subunit. The chain is Succinate--CoA ligase [ADP-forming] subunit beta from Salmonella dublin (strain CT_02021853).